The sequence spans 254 residues: Triosephosphate isomerase (254 aa).

Residue 12–14 (NWK) coordinates substrate. His99 functions as the Electrophile in the catalytic mechanism. Residue Glu169 is the Proton acceptor of the active site. Substrate-binding positions include Gly175, Ser214, and 235-236 (GG).

Belongs to the triosephosphate isomerase family. As to quaternary structure, homodimer.

It localises to the cytoplasm. It carries out the reaction D-glyceraldehyde 3-phosphate = dihydroxyacetone phosphate. It functions in the pathway carbohydrate biosynthesis; gluconeogenesis. The protein operates within carbohydrate degradation; glycolysis; D-glyceraldehyde 3-phosphate from glycerone phosphate: step 1/1. Involved in the gluconeogenesis. Catalyzes stereospecifically the conversion of dihydroxyacetone phosphate (DHAP) to D-glyceraldehyde-3-phosphate (G3P). The polypeptide is Triosephosphate isomerase (Bartonella tribocorum (strain CIP 105476 / IBS 506)).